The following is an 84-amino-acid chain: Putative membrane protein insertion efficiency factor (84 aa).

This sequence belongs to the UPF0161 family.

It localises to the cell inner membrane. Functionally, could be involved in insertion of integral membrane proteins into the membrane. This Shewanella pealeana (strain ATCC 700345 / ANG-SQ1) protein is Putative membrane protein insertion efficiency factor.